The primary structure comprises 543 residues: Malate synthase (543 aa).

This sequence belongs to the malate synthase family. Homodimer.

The protein resides in the cytoplasm. It catalyses the reaction glyoxylate + acetyl-CoA + H2O = (S)-malate + CoA + H(+). The protein operates within carbohydrate metabolism; glyoxylate cycle; (S)-malate from isocitrate: step 2/2. The sequence is that of Malate synthase (aceB) from Streptomyces arenae.